We begin with the raw amino-acid sequence, 262 residues long: Acyl-[acyl-carrier-protein]--UDP-N-acetylglucosamine O-acyltransferase (262 aa).

This sequence belongs to the transferase hexapeptide repeat family. LpxA subfamily. Homotrimer.

It localises to the cytoplasm. It carries out the reaction a (3R)-hydroxyacyl-[ACP] + UDP-N-acetyl-alpha-D-glucosamine = a UDP-3-O-[(3R)-3-hydroxyacyl]-N-acetyl-alpha-D-glucosamine + holo-[ACP]. The protein operates within glycolipid biosynthesis; lipid IV(A) biosynthesis; lipid IV(A) from (3R)-3-hydroxytetradecanoyl-[acyl-carrier-protein] and UDP-N-acetyl-alpha-D-glucosamine: step 1/6. Functionally, involved in the biosynthesis of lipid A, a phosphorylated glycolipid that anchors the lipopolysaccharide to the outer membrane of the cell. The sequence is that of Acyl-[acyl-carrier-protein]--UDP-N-acetylglucosamine O-acyltransferase from Paraburkholderia phytofirmans (strain DSM 17436 / LMG 22146 / PsJN) (Burkholderia phytofirmans).